A 356-amino-acid polypeptide reads, in one-letter code: OVARIAN TUMOR DOMAIN-containing deubiquitinating enzyme 10 (356 aa).

Positions 86-117 (DYSHQNQQQQHQQEGYTNNYSNNNNGYAWNDQ) are disordered. The span at 89–115 (HQNQQQQHQQEGYTNNYSNNNNGYAWN) shows a compositional bias: low complexity. An OTU domain is found at 213 to 337 (FTEVKVPGDG…EVHYNAIYLN (125 aa)). D221 is an active-site residue. Catalysis depends on C224, which acts as the Nucleophile. The active site involves H330.

The protein belongs to the peptidase C85 family.

It carries out the reaction Thiol-dependent hydrolysis of ester, thioester, amide, peptide and isopeptide bonds formed by the C-terminal Gly of ubiquitin (a 76-residue protein attached to proteins as an intracellular targeting signal).. In terms of biological role, hydrolase that can remove conjugated ubiquitin from proteins in vitro and may therefore play an important regulatory role at the level of protein turnover by preventing degradation. Cysteine protease with a preference for 'Lys-63' over 'Lys-48' over 'Met-1' -linked ubiquitin (UB) tetramers as substrates. Also cleaves RUB-GST fusion. This chain is OVARIAN TUMOR DOMAIN-containing deubiquitinating enzyme 10, found in Arabidopsis thaliana (Mouse-ear cress).